The primary structure comprises 191 residues: Peptidyl-tRNA hydrolase (191 aa).

Tyr15 lines the tRNA pocket. His20 functions as the Proton acceptor in the catalytic mechanism. TRNA-binding residues include Phe66, Asn68, and Asn114.

Belongs to the PTH family. In terms of assembly, monomer.

Its subcellular location is the cytoplasm. The enzyme catalyses an N-acyl-L-alpha-aminoacyl-tRNA + H2O = an N-acyl-L-amino acid + a tRNA + H(+). Its function is as follows. Hydrolyzes ribosome-free peptidyl-tRNAs (with 1 or more amino acids incorporated), which drop off the ribosome during protein synthesis, or as a result of ribosome stalling. Catalyzes the release of premature peptidyl moieties from peptidyl-tRNA molecules trapped in stalled 50S ribosomal subunits, and thus maintains levels of free tRNAs and 50S ribosomes. This chain is Peptidyl-tRNA hydrolase, found in Streptococcus agalactiae serotype III (strain NEM316).